An 892-amino-acid polypeptide reads, in one-letter code: NACHT, LRR and PYD domains-containing protein 6 (892 aa).

Residues 1–103 enclose the Pyrin domain; the sequence is MDQPEAPCSS…AAQLQERRLQ (103 aa). Positions 158 to 181 are disordered; that stretch reads APEEAMGPAEEPEPGRARRSDTHT. Residues 170 to 181 show a composition bias toward basic and acidic residues; it reads EPGRARRSDTHT. One can recognise an NACHT domain in the interval 196–513; the sequence is LTVVLQGPAG…EFLAALSYLL (318 aa). Residue 202–209 coordinates ATP; sequence GPAGIGKT. Positions 352–356 are disordered; the sequence is KDKKK. The LRR 1 repeat unit spans residues 462–487; sequence EKELEQLELRGSKVQTLFLSKKELPG. A disordered region spans residues 590-614; sequence APEVTEGAKGLEDTEEPEEEEEGEE. Acidic residues predominate over residues 602-614; it reads DTEEPEEEEEGEE. LRR repeat units follow at residues 727–747, 755–778, 811–834, and 845–868; these read LCHL…VCRD, APAL…MLSE, SPAL…YLCA, and TLSL…KRAK.

It belongs to the NLRP family. In terms of assembly, homomultimer; forms the NLRP6 inflammasome polymeric complex, a filament composed of homopolymers in response to pathogens and other damage-associated signals. The core of NLRP6 inflammasomes consists of a signal sensor component (NLRP6), an adapter (PYCARD/ASC), which recruits effector pro-inflammatory caspases (CASP1 and CASP4). Interacts (via pyrin domain) with PYCARD/ASC (via pyrin domain); interaction takes place following NLRP6 activation and formation of liquid-liquid phase separation (LLPS), initiating nucleation which greatly enhances further addition of soluble PYCARD/ASC molecules to the speck in a prion-like polymerization process. Clustered PYCARD/ASC nucleates the formation of CASP1 (or possibly CASP4) filaments through the interaction of their respective CARD domains, acting as a platform for CASP1 polymerization. CASP1 filament formation increases local enzyme concentration, resulting in trans-autocleavage and activation. Active CASP1 then processes IL1B and IL18 precursors, leading to the release of mature cytokines in the extracellular milieu and inflammatory response. Interacts with DHX15. In terms of processing, polyubiquitinated with 'Lys-63'-linked chains, promoting the interaction with PYCARD/ASC and formation of the NLRP6 inflammasome. Deubiquitination by CYLD decreases the interaction with PYCARD/ASC. As to expression, expressed in peripheral blood leukocytes, predominantly in granulocytes and, at lower levels, in CD4(+) and CD8(+) T-cells. Expressed in colonic myofibroblasts (at protein level).

The protein localises to the cytoplasm. Its subcellular location is the cytosol. It localises to the inflammasome. The protein resides in the cell membrane. It is found in the nucleus membrane. Its function is as follows. Acts as the sensor component of the NLRP6 inflammasome, which mediates inflammasome activation in response to various pathogen-associated signals, leading to maturation and secretion of IL1B and IL18. Inflammasomes are supramolecular complexes that assemble in the cytosol in response to pathogens and other damage-associated signals and play critical roles in innate immunity and inflammation. Acts as a recognition receptor (PRR): recognizes and binds specific pathogens and other damage-associated signals, such as lipoteichoic acid (LTA), a cell-wall component of Gram-positive bacteria, or double stranded RNA (dsRNA). May also recognize and bind lipopolysaccharide (LPS), a major component of the outer membrane of Gram-negative bacteria; however, LPS is probably not a major activator of the NLRP6 inflammasome. Following LTA- or dsRNA-binding, NLRP6 undergoes liquid-liquid phase separation (LLPS), enhancing multivalent interactions, an essential step for the formation of the NLRP6 inflammasome polymeric complex. The NLRP6 inflammasome acts by promoting recruitment of effector pro-inflammatory caspases (CASP1 and/or CASP4) that catalyze maturation and secretion of IL1B and IL18 in the extracellular milieu. The NLRP6 inflammasome plays a central role in the maintenance of epithelial integrity and host defense against microbial infections in the intestine. Required to restrict infection against Gram-positive bacteria by recognizing lipoteichoic acid (LTA), leading to recruitment of CASP4 and CASP1, and subsequent maturation and secretion of IL1B and IL18. Involved in intestinal antiviral innate immunity together with DHX15: recognizes and binds viral dsRNA to restrict infection by enteric viruses through the interferon pathway and GSDMD-dependent release of IL18. Required to prevent infection by the apicomplexan parasite Cryptosporidium in enterocytes by promoting GSDMD-dependent release of IL18. The NLRP6 inflammasome may also regulate the gut microbiota composition by acting as a sensor of microbiota-associated metabolites to form a PYCARD/ASC-dependent inflammasome for downstream IL18 release and secretion of antimicrobial peptides. Essential for gut mucosal self-renewal and proliferation. Regulate mucus secretion in an inflammasome- and autophagy-dependent manner to prevent invasion by enteric bacteria,. During systemic bacterial infections, the NLRP6 inflammasome negatively regulates neutrophil recruitment and neutrophil extracellular traps (NETs) formation. May promote peripheral nerve recovery following injury via an inflammasome-independent mechanism. This Homo sapiens (Human) protein is NACHT, LRR and PYD domains-containing protein 6.